Reading from the N-terminus, the 277-residue chain is MSLAEQIEQQQGDAGWSAHLQLRFVQRGDVTRLGAWKHFGPLLVQRPFYPEGSPCHVYVLHPPGGIVAGDRLELNIHLEPGSHALLTMPGASKFYRSIGPTARLTQRFHLAAGSTLEWLPQDSIFFSGARASLASRFSLEPGARLLAWETLCLGRPVMHERFDHGTLDSLLHIELPDEVGLHERLRIAGGHLDKLGGHPLLATFCAAPADQAVLEQVRSLLDELGNPAGATLLGSLLVIRLLDHDNQHLQRTLQRLWHVLRPAILGLPACPPRIWAT.

The protein belongs to the UreD family. In terms of assembly, ureD, UreF and UreG form a complex that acts as a GTP-hydrolysis-dependent molecular chaperone, activating the urease apoprotein by helping to assemble the nickel containing metallocenter of UreC. The UreE protein probably delivers the nickel.

It localises to the cytoplasm. In terms of biological role, required for maturation of urease via the functional incorporation of the urease nickel metallocenter. This Pseudomonas putida (strain GB-1) protein is Urease accessory protein UreD.